Reading from the N-terminus, the 207-residue chain is Outer-membrane lipoprotein carrier protein (207 aa).

A signal peptide spans 1 to 21 (MRAIRMLLVSALAMGAVSAHA).

This sequence belongs to the LolA family. As to quaternary structure, monomer.

The protein resides in the periplasm. Its function is as follows. Participates in the translocation of lipoproteins from the inner membrane to the outer membrane. Only forms a complex with a lipoprotein if the residue after the N-terminal Cys is not an aspartate (The Asp acts as a targeting signal to indicate that the lipoprotein should stay in the inner membrane). This is Outer-membrane lipoprotein carrier protein from Pseudomonas entomophila (strain L48).